The sequence spans 505 residues: ATP synthase subunit alpha (505 aa).

An ATP-binding site is contributed by 170–177 (GDRQTGKS).

The protein belongs to the ATPase alpha/beta chains family. As to quaternary structure, F-type ATPases have 2 components, CF(1) - the catalytic core - and CF(0) - the membrane proton channel. CF(1) has five subunits: alpha(3), beta(3), gamma(1), delta(1), epsilon(1). CF(0) has four main subunits: a(1), b(1), b'(1) and c(9-12).

Its subcellular location is the cellular thylakoid membrane. It carries out the reaction ATP + H2O + 4 H(+)(in) = ADP + phosphate + 5 H(+)(out). Functionally, produces ATP from ADP in the presence of a proton gradient across the membrane. The alpha chain is a regulatory subunit. In Prochlorococcus marinus (strain MIT 9215), this protein is ATP synthase subunit alpha.